Reading from the N-terminus, the 750-residue chain is Photosystem I P700 chlorophyll a apoprotein A1 (750 aa).

Transmembrane regions (helical) follow at residues 70–93, 156–179, 195–219, 291–309, 346–369, 385–411, 433–455, and 531–549; these read VFSAHFGQLSIIFLWLSGMYFHGA, LYCTAIGALVFAALMLFAGWFHYH, LNHHLAGLLGLGSLSWAGHQVHVSL, IAHHHLAIAILFLIAGHMY, WHAQLSLNLAMLGSLTIIVAHHMY, LSLFTHHMWIGGFLIVGAAAHAAIFMV, AIISHLNWVCIFLGFHSFGLYIH, and FLVHHIHAFTIHVTVLILL. The [4Fe-4S] cluster site is built by Cys573 and Cys582. 2 helical membrane passes run 589–610 and 664–686; these read HVFLGLFWMYNAISVVIFHFSW and LSAYGLFFLGAHFVWAFSLMFLF. His675 lines the chlorophyll a' pocket. Chlorophyll a contacts are provided by Met683 and Tyr691. Residue Trp692 participates in phylloquinone binding. A helical transmembrane segment spans residues 724 to 744; that stretch reads AVGVTHYLLGGIATTWAFFLA.

This sequence belongs to the PsaA/PsaB family. The PsaA/B heterodimer binds the P700 chlorophyll special pair and subsequent electron acceptors. PSI consists of a core antenna complex that captures photons, and an electron transfer chain that converts photonic excitation into a charge separation. The eukaryotic PSI reaction center is composed of at least 11 subunits. It depends on P700 is a chlorophyll a/chlorophyll a' dimer, A0 is one or more chlorophyll a, A1 is one or both phylloquinones and FX is a shared 4Fe-4S iron-sulfur center. as a cofactor.

The protein localises to the plastid. The protein resides in the chloroplast thylakoid membrane. It carries out the reaction reduced [plastocyanin] + hnu + oxidized [2Fe-2S]-[ferredoxin] = oxidized [plastocyanin] + reduced [2Fe-2S]-[ferredoxin]. Its function is as follows. PsaA and PsaB bind P700, the primary electron donor of photosystem I (PSI), as well as the electron acceptors A0, A1 and FX. PSI is a plastocyanin-ferredoxin oxidoreductase, converting photonic excitation into a charge separation, which transfers an electron from the donor P700 chlorophyll pair to the spectroscopically characterized acceptors A0, A1, FX, FA and FB in turn. Oxidized P700 is reduced on the lumenal side of the thylakoid membrane by plastocyanin. This is Photosystem I P700 chlorophyll a apoprotein A1 from Arabidopsis thaliana (Mouse-ear cress).